A 359-amino-acid polypeptide reads, in one-letter code: Type-1 angiotensin II receptor (359 aa).

At 1 to 25 (MILNSSTEDGIKRIQDDCPKAGRHN) the chain is on the extracellular side. Asn-4 carries N-linked (GlcNAc...) asparagine glycosylation. Residues Gln-15 and Asp-17 each coordinate angiotensin II. 2 disulfides stabilise this stretch: Cys-18–Cys-274 and Cys-101–Cys-180. The helical transmembrane segment at 26-55 (YIFVMIPTLYSIIFVVGIFGNSLVVIVIYF) threads the bilayer. Topologically, residues 56–61 (YMKLKT) are cytoplasmic. A helical transmembrane segment spans residues 62 to 89 (VASVFLLNLALADLCFLLTLPLWAVYTA). Residues 90-98 (MEYRWPFGN) are Extracellular-facing. A helical transmembrane segment spans residues 99–125 (YLCKIASASVSFNLYASVFLLTCLSID). At 126-141 (RYVAIVHPMKSPVRRT) the chain is on the cytoplasmic side. Residues 142 to 165 (MLMAKVTCIIIWLLAGLASLPTII) traverse the membrane as a helical segment. Over 166–190 (HRNVFFIENTNITVCAFHYESQNST) the chain is Extracellular. Angiotensin II is bound at residue Arg-167. Asn-176 carries an N-linked (GlcNAc...) asparagine glycan. Positions 182, 183, and 184 each coordinate angiotensin II. Asn-188 is a glycosylation site (N-linked (GlcNAc...) asparagine). Residues 191 to 216 (LPIGLGLTKNILGFLFPFLIILTSYT) traverse the membrane as a helical segment. An angiotensin II-binding site is contributed by Lys-199. At 217-239 (LIWKTLKRAYEIQKNKPRNDDIF) the chain is on the cytoplasmic side. The helical transmembrane segment at 240-268 (KIIMAIVLFFFFSWVPHQIFTFLDVLIQL) threads the bilayer. Residues 269–278 (GIIHDCKIAD) lie on the Extracellular side of the membrane. The chain crosses the membrane as a helical span at residues 279–304 (IVDTAMPITICIAYFNNCLNPLFYGF). Residues 305–359 (LGKKFKKYFLQLLKYIPPKAKSHSSLSTKMSTLSYRPSDHGNASTKKSASCVEVE) lie on the Cytoplasmic side of the membrane. Residues 335 to 352 (STLSYRPSDHGNASTKKS) are compositionally biased toward polar residues. A disordered region spans residues 335–359 (STLSYRPSDHGNASTKKSASCVEVE). Cys-355 is lipidated: S-palmitoyl cysteine.

Belongs to the G-protein coupled receptor 1 family. In terms of assembly, interacts with MAS1. Interacts with ARRB1. Interacts with FLNA (via filamin repeat 21); increases PKA-mediated phosphorylation of FLNA. Post-translationally, C-terminal Ser or Thr residues may be phosphorylated. As to expression, adrenal, liver, aorta, kidney, lung, testis and heart.

The protein localises to the cell membrane. Receptor for angiotensin II, a vasoconstricting peptide, which acts as a key regulator of blood pressure and sodium retention by the kidney. The activated receptor in turn couples to G-alpha proteins G(q) (GNAQ, GNA11, GNA14 or GNA15) and thus activates phospholipase C and increases the cytosolic Ca(2+) concentrations, which in turn triggers cellular responses such as stimulation of protein kinase C. This Canis lupus familiaris (Dog) protein is Type-1 angiotensin II receptor (AGTR1).